The primary structure comprises 1076 residues: MIMNPKIHNKILKNLAKLKKKVFTKYAAYDFNFAYDKNGNVYLVGVDNVTNQTFNLIKPVFKFLKKPLPAELYGMDQQPFYFVNNHHYIDALNSDTGEQELLRYNVIDQSLVNAQTNDLVDPAFYTDLEGYELDLSQYTGSLLDLSNEVISVEQQPVEQEVNLTPEQVEEAEQVEQQPVDQQQVQQVDPNLNEQPVEGDNQNFTQQYYDQQLGYADQNVDYGYDPQQYTQEQDYVDNTQQYDQVQDYVDPNQQYYDDQQQYDQQGYDQGYDQQYDQQGYDQQGYDQGYDQQYDQQYYDDQQQYDEQPDQQVKAVVEQVVDEVVEEQQPVEVAKPAPTKPVGPKPQPGKKATKYVIKKPEPKPKVVKEEPIEPAVEKEEVVTVVEQVVDQPVQVAEVQPEPVVVADDEIKLASEQPVKKKINLDDLQQIPVVIKLPKFETPKLPEPKADSEQKEEIAVKVVEQPVENPQVQETKHHHALPKVKIEKRQEVELVPSKLDDHYDLIEEEDDFFVDKFKFEDIKLSDLLVEQKPIEVNQPVQQPVVLEQSTPSVQAQPQSVEPKLEITKLEELVEIKTDNTESLNKLETLIDENKKIIDQFKQLKEEAKKSNSNINLEKVAKQLVDYLTNKLNEKTAALNKPEPSTVELNKVEQAKQKAVEKLVHEQVVFQPREKVVQQPKEVVAKPYFEESDDLLTSVSNKPKQPTSELLDFLVQQVVDGEEDDLPPPTNFDKWPNQNVRQKLDEINQVEAQRFNQTQFVPPQSLNQVETPNQRLFLEPEIQVQPQALYTASREHEQVQPKAQHQQPTTRIEREEVVNKFQREPLVSPNRLAYHSNKEFDDLYQNHYEQRTARINPQDSYYDQGYEQPDPYQEQQPYPQEQYLDPRYQQQVDPRYQKETYQEYNRPFPPNQEYDYYPPAYESRRDYQPYQPRRVNYEVRKPLAYEFSKQPAPRRYQQLPNRYNESDQSRQLAYPVHKGTLRTEADFLRFREGYGYDYDRPSTQYYRSNYDTYVREVRRPIRQLGMIEPVAEFRSRTLAPRRVARPTYGLRRVSRIPSLAPRGYNQQPRVRRVPVSRGYW.

A fibronectin-binding region spans residues 264–284 (QGYDQGYDQQYDQQGYDQQGY). Residues 326 to 335 (QQPVEVAKPA) are compositionally biased toward low complexity. Positions 326–351 (QQPVEVAKPAPTKPVGPKPQPGKKAT) are disordered. Residues 336–345 (PTKPVGPKPQ) show a composition bias toward pro residues. Positions 562 to 616 (EITKLEELVEIKTDNTESLNKLETLIDENKKIIDQFKQLKEEAKKSNSNINLEKV) form a coiled coil. Disordered stretches follow at residues 789–808 (SREH…TTRI) and 850–873 (RINP…EQQP). A compositionally biased stretch (polar residues) spans 797–806 (PKAQHQQPTT). A compositionally biased stretch (low complexity) spans 862–873 (YEQPDPYQEQQP).

The protein localises to the cell projection. It localises to the attachment organelle membrane. Functionally, binds immobilized fibronectin. In terms of biological role, component of the cytoskeleton-like structure which stabilizes the shape of the wall-less mycoplasma. This cytoskeleton-like network of accessory proteins containing HMW proteins 1 to 5 allows the proper anchoring of cytadhesin proteins in the mycoplasmal membrane at the attachment organelle. Essential for successful surface parasitism. The protein is Cytadherence high molecular weight protein 3 (hlp3) of Mycoplasmoides gallisepticum (strain R(low / passage 15 / clone 2)) (Mycoplasma gallisepticum).